The following is a 545-amino-acid chain: Chaperonin GroEL (545 aa).

Residues 30 to 33 (TLGP), Lys-51, 87 to 91 (DGTTT), Gly-415, 479 to 481 (NAA), and Asp-495 contribute to the ATP site. Residues 526–545 (KEDKPDLGGAGGMGGMGGMM) are disordered. The span at 533–545 (GGAGGMGGMGGMM) shows a compositional bias: gly residues.

It belongs to the chaperonin (HSP60) family. In terms of assembly, forms a cylinder of 14 subunits composed of two heptameric rings stacked back-to-back. Interacts with the co-chaperonin GroES.

The protein resides in the cytoplasm. It catalyses the reaction ATP + H2O + a folded polypeptide = ADP + phosphate + an unfolded polypeptide.. Its function is as follows. Together with its co-chaperonin GroES, plays an essential role in assisting protein folding. The GroEL-GroES system forms a nano-cage that allows encapsulation of the non-native substrate proteins and provides a physical environment optimized to promote and accelerate protein folding. The chain is Chaperonin GroEL from Sodalis glossinidius.